The sequence spans 351 residues: Ribosomal RNA large subunit methyltransferase M (351 aa).

S-adenosyl-L-methionine-binding positions include Ser186, 219-222 (APGG), Asp238, Asp258, and Asp274. The Proton acceptor role is filled by Lys303.

Belongs to the class I-like SAM-binding methyltransferase superfamily. RNA methyltransferase RlmE family. RlmM subfamily. In terms of assembly, monomer.

It localises to the cytoplasm. The enzyme catalyses cytidine(2498) in 23S rRNA + S-adenosyl-L-methionine = 2'-O-methylcytidine(2498) in 23S rRNA + S-adenosyl-L-homocysteine + H(+). In terms of biological role, catalyzes the 2'-O-methylation at nucleotide C2498 in 23S rRNA. This Xylella fastidiosa (strain 9a5c) protein is Ribosomal RNA large subunit methyltransferase M.